Reading from the N-terminus, the 435-residue chain is MFLDTAKVSVQAGRGGDGMVAFRREKYVPNGGPWGGDGGKGGSVIFKVDEGLRTLMDFRYNRKFKAKSGEKGMTKGMHGRGSEDLIISVPQGTTVRDAETGKVLTDLVEHGQEFVVAKGGRGGRGNIRFATPRNPAPEIAENGEPGEERQLELELKILADVGLVGFPSVGKSTLLSVVSSAKPKIGAYHFTTIVPNLGMVRTKSGESFAMADLPGLIEGASQGVGLGTQFLRHIERTRVILHVIDMSAAEGRDPYEDYVAINKELEAYNLRLMERPQIIVANKMDMPEAKEQLQRFKEQLAAQYDDFEELPMIFPISSLAHQGLDSLLEATAELLAKTDDFLLYDEADFAEDEAYYGFAAEEKAFEISRADDAAWVLSGEKLERLFVMTNLERDESIMKFARQLRGMGVDEALRERGAKDGDIVRIGKFEFEFVD.

Positions 1–158 (MFLDTAKVSV…RQLELELKIL (158 aa)) constitute an Obg domain. The OBG-type G domain occupies 159–336 (ADVGLVGFPS…LLEATAELLA (178 aa)). Residues 165–172 (GFPSVGKS), 190–194 (FTTIV), 212–215 (DLPG), 282–285 (NKMD), and 317–319 (SSL) each bind GTP. Residues Ser172 and Thr192 each coordinate Mg(2+). The region spanning 357-435 (GFAAEEKAFE…IGKFEFEFVD (79 aa)) is the OCT domain.

Belongs to the TRAFAC class OBG-HflX-like GTPase superfamily. OBG GTPase family. As to quaternary structure, monomer. Mg(2+) serves as cofactor.

It localises to the cytoplasm. Its function is as follows. An essential GTPase which binds GTP, GDP and possibly (p)ppGpp with moderate affinity, with high nucleotide exchange rates and a fairly low GTP hydrolysis rate. Plays a role in control of the cell cycle, stress response, ribosome biogenesis and in those bacteria that undergo differentiation, in morphogenesis control. The chain is GTPase Obg from Streptococcus equi subsp. zooepidemicus (strain MGCS10565).